Consider the following 636-residue polypeptide: TNFAIP3-interacting protein 1 (636 aa).

Residues 20 to 73 (EASAAFERLVKENSRLKEKMQGIKMLGELLEESQMEATRLRQKAEELVKDNELL) are a coiled coil. The span at 61–71 (QKAEELVKDNE) shows a compositional bias: basic and acidic residues. Disordered regions lie at residues 61-151 (QKAE…GPLP) and 252-283 (MSNG…QQQA). S77 bears the Phosphoserine mark. The interval 94 to 412 (SNVTASPTAP…SPLTRQREYQ (319 aa)) is interaction with Nef. Residues 131-142 (EEQNSPESSSHA) show a composition bias toward polar residues. Positions 196–258 (SKVHKNEQRT…KLLMSNGNKE (63 aa)) form a coiled coil. A Phosphoserine modification is found at S284. Residues 294–535 (VALGAAEKKV…RKAKASGERY (242 aa)) are a coiled coil. The segment at 351 to 367 (DLEAEREQKQRDFDRKL) is interaction with Shigella flexneri ipah9.8. Phosphoserine is present on S403. Residues 431–588 (TPPSSPPTAF…MEHPPPLPNS (158 aa)) are required for inhibitory activity of TNF-induced NF-kappa-B activation. Phosphothreonine is present on T438. Residue S442 is modified to Phosphoserine. Residues 452–510 (KQELVTQNELLKQQVKIFEEDFQRERSDRERMNEEKEELKKQVEKLQAQVTLSNAQLKA) form a ubiquitin-binding domain (UBD) region. The Nuclear localization signal motif lies at 524-530 (QKRKAKA). Position 552 is a phosphotyrosine (Y552). R571 bears the Asymmetric dimethylarginine mark. At R599 the chain carries Asymmetric dimethylarginine; alternate. Residue R599 is modified to Omega-N-methylarginine; alternate. The segment at 603–636 (GGVRNPNQSSQVMDPPTARPTEPESPKNDREGPQ) is disordered. Residues 623-636 (TEPESPKNDREGPQ) show a composition bias toward basic and acidic residues. Residue S627 is modified to Phosphoserine.

In terms of assembly, interacts with TNFAIP3 and IKBKG (polyubiquitinated); facilitates TNFAIP3-mediated de-ubiquitination of NEMO/IKBKG. Interacts with polyubiquitin. Interacts with MAPK1, SELPLG and PIK3CD. Interacts with IRAK1 (polyubiquitinated). Interacts with MYD88; the interaction is indicative for participation in an activated TLR-signaling complex. Interacts with HIV-1 matrix protein. Interacts with TAX1BP1. As to quaternary structure, (Microbial infection) Interacts with Shigella flexneri ipah9.8; the interaction promotes polyubiquitination of IKBKG. In terms of processing, phosphorylation at Tyr-552 by SRC-family kinases recruits phosphoinositide-3-kinase (PI3K) PIK3CD:p85 heterodimer which results in integrin activation and leukocyte adhesion to activated endothelium during inflammation. In terms of tissue distribution, ubiquitous. Strongly expressed in peripheral blood lymphocytes, spleen and skeletal muscle, and is weakly expressed in the brain. In peripheral blood mononucleocytes, isoform 4 is mainly expressed and isoform 1 and isoform 7 are almost not expressed. Expression of isoform 1 and isoform 7 increases in leukemic cells.

The protein resides in the cytoplasm. The protein localises to the nucleus. Functionally, inhibits NF-kappa-B activation and TNF-induced NF-kappa-B-dependent gene expression by regulating TAX1BP1 and A20/TNFAIP3-mediated deubiquitination of IKBKG; proposed to link A20/TNFAIP3 to ubiquitinated IKBKG. Involved in regulation of EGF-induced ERK1/ERK2 signaling pathway; blocks MAPK3/MAPK1 nuclear translocation and MAPK1-dependent transcription. Increases cell surface CD4(T4) antigen expression. Involved in the anti-inflammatory response of macrophages and positively regulates TLR-induced activation of CEBPB. Involved in the prevention of autoimmunity; this function implicates binding to polyubiquitin. Involved in leukocyte integrin activation during inflammation; this function is mediated by association with SELPLG and dependent on phosphorylation by SRC-family kinases. Interacts with HIV-1 matrix protein and is packaged into virions and overexpression can inhibit viral replication. May regulate matrix nuclear localization, both nuclear import of PIC (Preintegration complex) and export of GAG polyprotein and viral genomic RNA during virion production. In case of infection, promotes association of IKBKG with Shigella flexneri E3 ubiquitin-protein ligase ipah9.8 p which in turn promotes polyubiquitination of IKBKG leading to its proteasome-dependent degradation and thus is perturbing NF-kappa-B activation during bacterial infection. The sequence is that of TNFAIP3-interacting protein 1 (TNIP1) from Homo sapiens (Human).